The chain runs to 655 residues: p-hydroxybenzoic acid efflux pump subunit AaeB (655 aa).

Residues 1-12 are Periplasmic-facing; it reads MGIFSIANQHIR. A helical membrane pass occupies residues 13-33; the sequence is FAVKLACAIVLALFIGFHFQL. Residues 34–37 are Cytoplasmic-facing; it reads ETPR. Residues 38–58 traverse the membrane as a helical segment; that stretch reads WAVLTAAIVAAGPAFAAGGEP. Residues 59 to 68 are Periplasmic-facing; it reads YSGAIRYRGM. Residues 69–89 form a helical membrane-spanning segment; the sequence is LRIIGTFIGCIAALIIIISMI. The Cytoplasmic portion of the chain corresponds to 90-92; that stretch reads RAP. Residues 93 to 113 traverse the membrane as a helical segment; sequence LLMILVCCVWAGFCTWISSLV. The Periplasmic segment spans residues 114-120; it reads RIENSYA. The chain crosses the membrane as a helical span at residues 121-141; that stretch reads WGLSGYTALIIVITIQTEPLL. At 142-151 the chain is on the cytoplasmic side; sequence TPQFALERCS. A helical membrane pass occupies residues 152–172; that stretch reads EIVIGIGCAILADLLFSPRSI. The Periplasmic segment spans residues 173–369; the sequence is KQEVDRELDC…RTTLSCILGT (197 aa). The chain crosses the membrane as a helical span at residues 370–390; it reads LFWLWTGWTSGNGAMVMIAVV. The Cytoplasmic portion of the chain corresponds to 391–406; the sequence is TSLAMRLPNPRMVCID. The chain crosses the membrane as a helical span at residues 407-427; it reads FIYGTLAALPLGLLYFLVIIP. Residues 428 to 430 are Periplasmic-facing; sequence NTQ. Residues 431-451 form a helical membrane-spanning segment; sequence QSMLLLCLSLAVLGFFIGIEV. The Cytoplasmic portion of the chain corresponds to 452-459; the sequence is QKRRLGSM. A helical transmembrane segment spans residues 460–480; it reads GALASTINIIVLDNPMTFHFI. Gln481 is a topological domain (periplasmic). Residues 482–502 form a helical membrane-spanning segment; sequence FLDSALGQIVGCMLAFIVILL. Residues 503–655 lie on the Cytoplasmic side of the membrane; sequence VRDKSKDRTG…HKYQNALTDS (153 aa).

The protein belongs to the aromatic acid exporter ArAE (TC 2.A.85) family.

It is found in the cell inner membrane. In terms of biological role, forms an efflux pump with AaeA. Could function as a metabolic relief valve, allowing to eliminate certain compounds when they accumulate to high levels in the cell. The protein is p-hydroxybenzoic acid efflux pump subunit AaeB of Salmonella typhi.